The sequence spans 641 residues: MSMKRFGKAAYRIANELVAKGGRLPIFQRFLPRIFPATYNLGVHVVLKKAPFPRQNALRIARLVTRHGRVFRPFSSVIIERHRFQNQNDWRRKFQPIRKELPRNVDLVERIRQIFGNSLRYNEDLKSTEWPNRIDSYEFGEFLGQGCNAAVYSARLANSDAESSGNTHYGAGFNEVTNILAEIPPVSKVAQKKFPLAIKLMFNFEHDRDGDAHLLKSMGNELAPYPNAAKLLNGQMGTFRPLPAKHPNVVRIQTAFIDSLKVLPDAIERYPDALHTARWYESIASEPKTMYVVMRRYRQTLHEYVWTRHRNYWTGRVIIAQLLEACTYLHKHKVAQRDMKSDNILLEYDFDDEIPQLVVADFGCALACDNWQVDYESDEVSLGGNAKTKAPEIATAVPGKNVKVNFEMADTWAAGGLSYEVLTRSNPFYKLLDTATYQESELPALPSRVNFVARDVIFDLLKRDPNERVKPNIAANALNLSLFRMGEDVKQMMEKCGISQMTTLLAGSSKVLSQKINSRLDKVMNLITAETIMANLAPHLISRAERQLRATFLSRMNREDIWRSLQYFFPAGVQLDTPATSSDCLETISSLMSSFSNDSENYEKQQKPAKNGYNNVPLLLRNVIRTDADGINGIVHRVRSK.

A mitochondrion-targeting transit peptide spans 1 to 74 (MSMKRFGKAA…TRHGRVFRPF (74 aa)). Positions 137–483 (YEFGEFLGQG…AANALNLSLF (347 aa)) constitute a Protein kinase domain. Residues 143–151 (LGQGCNAAV) and K199 each bind ATP. D338 (proton acceptor) is an active-site residue.

This sequence belongs to the protein kinase superfamily. Ser/Thr protein kinase family. It depends on Mg(2+) as a cofactor. In terms of processing, autophosphorylated.

The protein localises to the mitochondrion. It catalyses the reaction L-seryl-[protein] + ATP = O-phospho-L-seryl-[protein] + ADP + H(+). The catalysed reaction is L-threonyl-[protein] + ATP = O-phospho-L-threonyl-[protein] + ADP + H(+). Protects against mitochondrial dysfunction during cellular stress, potentially by phosphorylating mitochondrial proteins. Plays a role in mitophagy. This is Serine/threonine-protein kinase pink-1, mitochondrial (pink-1) from Caenorhabditis elegans.